The primary structure comprises 316 residues: Ribosomal RNA small subunit methyltransferase H (316 aa).

S-adenosyl-L-methionine-binding positions include 35–37 (GGH), aspartate 55, phenylalanine 79, aspartate 101, and glutamine 108.

This sequence belongs to the methyltransferase superfamily. RsmH family.

The protein localises to the cytoplasm. The catalysed reaction is cytidine(1402) in 16S rRNA + S-adenosyl-L-methionine = N(4)-methylcytidine(1402) in 16S rRNA + S-adenosyl-L-homocysteine + H(+). Functionally, specifically methylates the N4 position of cytidine in position 1402 (C1402) of 16S rRNA. This is Ribosomal RNA small subunit methyltransferase H from Vibrio vulnificus (strain CMCP6).